The following is a 156-amino-acid chain: Small ribosomal subunit protein uS7 (156 aa).

It belongs to the universal ribosomal protein uS7 family. As to quaternary structure, part of the 30S ribosomal subunit. Contacts proteins S9 and S11.

Functionally, one of the primary rRNA binding proteins, it binds directly to 16S rRNA where it nucleates assembly of the head domain of the 30S subunit. Is located at the subunit interface close to the decoding center, probably blocks exit of the E-site tRNA. The chain is Small ribosomal subunit protein uS7 from Prochlorococcus marinus (strain MIT 9301).